Consider the following 393-residue polypeptide: MKILSVNAGSSSLKFQLLQMPEEFEIASGLVERIGNKNAEFKIKFNGSSKTQSDLVVLDHSVAVDLVIKGLLENKVIASLDEIQGVGHRVVQGGQLFKESVVIDDDVVIKIASLNDLAPLHNPANIIGINAFRKAISNVIHVAVFDTTFHQTMPEENFLYGTPYEWYTKHGVRKYGFHGTSHQYVSELAHARLGKDHSRIIVAHIGNGASITAVRDGKSIDTSMGLTPLEGFPTGTRSGNVDPAIFQLMQQKEGYSLEKTLNELNKNSGYLGISGVSHDSRDIIAAAEGGNKRAQLALDIQAKRIVDYIASYYVLLGGLDALVFTAGIGENAKEVRKLICDRLGVLGIKLDDNKNNSRGDKEISSDASNVKIWVIPTNEEVMIARDVLRLQNK.

Asparagine 7 lines the Mg(2+) pocket. Residue lysine 14 participates in ATP binding. Arginine 89 contacts substrate. Aspartate 146 serves as the catalytic Proton donor/acceptor. Residues histidine 204–glycine 208, aspartate 279–arginine 281, and glycine 327–asparagine 331 each bind ATP. Glutamate 379 serves as a coordination point for Mg(2+).

The protein belongs to the acetokinase family. In terms of assembly, homodimer. The cofactor is Mg(2+). Requires Mn(2+) as cofactor.

The protein localises to the cytoplasm. The catalysed reaction is acetate + ATP = acetyl phosphate + ADP. It participates in metabolic intermediate biosynthesis; acetyl-CoA biosynthesis; acetyl-CoA from acetate: step 1/2. In terms of biological role, catalyzes the formation of acetyl phosphate from acetate and ATP. Can also catalyze the reverse reaction. This is Acetate kinase from Acholeplasma laidlawii (strain PG-8A).